The following is a 195-amino-acid chain: Nicotinamide riboside kinase 1 (195 aa).

10–18 is an ATP binding site; that stretch reads GVTNGGKTT. Residues Thr-17 and Asp-36 each coordinate Mg(2+). Asp-36 (proton acceptor) is an active-site residue. Residues 36-39 and 55-56 contribute to the substrate site; these read DDFF and YD. Arg-128 lines the ATP pocket. Substrate contacts are provided by residues Arg-129 and 134-135; that span reads YE. Residues 132–134 and 172–174 each bind ATP; these read RVY and RSE.

Belongs to the uridine kinase family. NRK subfamily. Monomer.

The enzyme catalyses beta-nicotinamide D-riboside + ATP = beta-nicotinamide D-ribonucleotide + ADP + H(+). It catalyses the reaction beta-D-ribosylnicotinate + ATP = nicotinate beta-D-ribonucleotide + ADP + H(+). It functions in the pathway cofactor biosynthesis; NAD(+) biosynthesis. Catalyzes the phosphorylation of nicotinamide riboside (NR) and nicotinic acid riboside (NaR) to form nicotinamide mononucleotide (NMN) and nicotinic acid mononucleotide (NaMN). The chain is Nicotinamide riboside kinase 1 (Nmrk1) from Rattus norvegicus (Rat).